The sequence spans 240 residues: Lipoprotein-releasing system ATP-binding protein LolD (240 aa).

An ABC transporter domain is found at 15 to 240 (IRAERLGKTY…GLRELTSAEV (226 aa)). Residue 51 to 58 (GASGAGKS) participates in ATP binding.

This sequence belongs to the ABC transporter superfamily. Lipoprotein translocase (TC 3.A.1.125) family. As to quaternary structure, the complex is composed of two ATP-binding proteins (LolD) and two transmembrane proteins (LolC and LolE).

It is found in the cell inner membrane. In terms of biological role, part of the ABC transporter complex LolCDE involved in the translocation of mature outer membrane-directed lipoproteins, from the inner membrane to the periplasmic chaperone, LolA. Responsible for the formation of the LolA-lipoprotein complex in an ATP-dependent manner. The polypeptide is Lipoprotein-releasing system ATP-binding protein LolD (Xylella fastidiosa (strain 9a5c)).